Here is a 206-residue protein sequence, read N- to C-terminus: N-(5'-phosphoribosyl)anthranilate isomerase (206 aa).

This sequence belongs to the TrpF family.

The catalysed reaction is N-(5-phospho-beta-D-ribosyl)anthranilate = 1-(2-carboxyphenylamino)-1-deoxy-D-ribulose 5-phosphate. It functions in the pathway amino-acid biosynthesis; L-tryptophan biosynthesis; L-tryptophan from chorismate: step 3/5. This is N-(5'-phosphoribosyl)anthranilate isomerase from Pseudomonas putida (strain W619).